The sequence spans 920 residues: Protein translocase subunit SecA (920 aa).

ATP contacts are provided by residues Gln85, 103–107, and Asp514; that span reads GEGKT. Positions 904, 906, 915, and 916 each coordinate Zn(2+).

The protein belongs to the SecA family. As to quaternary structure, monomer and homodimer. Part of the essential Sec protein translocation apparatus which comprises SecA, SecYEG and auxiliary proteins SecDF-YajC and YidC. Requires Zn(2+) as cofactor.

It localises to the cell inner membrane. The protein resides in the cytoplasm. The enzyme catalyses ATP + H2O + cellular proteinSide 1 = ADP + phosphate + cellular proteinSide 2.. Its function is as follows. Part of the Sec protein translocase complex. Interacts with the SecYEG preprotein conducting channel. Has a central role in coupling the hydrolysis of ATP to the transfer of proteins into and across the cell membrane, serving both as a receptor for the preprotein-SecB complex and as an ATP-driven molecular motor driving the stepwise translocation of polypeptide chains across the membrane. In Janthinobacterium sp. (strain Marseille) (Minibacterium massiliensis), this protein is Protein translocase subunit SecA.